The primary structure comprises 203 residues: Small ribosomal subunit protein uS4c (203 aa).

Positions 17–39 (TLPGLTTKKSNKLNRPGKDGNTD) are disordered. Positions 92 to 164 (MRLDTLCFTL…IKNNQVREIP (73 aa)) constitute an S4 RNA-binding domain.

Belongs to the universal ribosomal protein uS4 family. In terms of assembly, part of the 30S ribosomal subunit. Contacts protein S5. The interaction surface between S4 and S5 is involved in control of translational fidelity.

It is found in the plastid. It localises to the chloroplast. Functionally, one of the primary rRNA binding proteins, it binds directly to 16S rRNA where it nucleates assembly of the body of the 30S subunit. Its function is as follows. With S5 and S12 plays an important role in translational accuracy. This Phaeodactylum tricornutum (strain CCAP 1055/1) protein is Small ribosomal subunit protein uS4c (rps4).